A 285-amino-acid chain; its full sequence is Ubiquinone biosynthesis protein COQ4, mitochondrial (285 aa).

Residues 1–11 constitute a mitochondrion transit peptide; sequence MPPAVRQGMRT. The Zn(2+) site is built by His-166, Asp-167, His-170, and Glu-182.

It belongs to the COQ4 family. Component of a multi-subunit COQ enzyme complex, composed of at least COQ3, COQ4, COQ5, COQ6, COQ7 and COQ9. Requires Zn(2+) as cofactor.

The protein localises to the mitochondrion inner membrane. It catalyses the reaction a 4-hydroxy-3-methoxy-5-(all-trans-polyprenyl)benzoate + H(+) = a 2-methoxy-6-(all-trans-polyprenyl)phenol + CO2. It functions in the pathway cofactor biosynthesis; ubiquinone biosynthesis. In terms of biological role, lyase that catalyzes the C1-decarboxylation of 4-hydroxy-3-methoxy-5-(all-trans-polyprenyl)benzoic acid into 2-methoxy-6-(all-trans-polyprenyl)phenol during ubiquinone biosynthesis. This is Ubiquinone biosynthesis protein COQ4, mitochondrial from Paracoccidioides lutzii (strain ATCC MYA-826 / Pb01) (Paracoccidioides brasiliensis).